Reading from the N-terminus, the 371-residue chain is Neuropeptide Y receptor type 6 (371 aa).

Residues Met1 to Pro31 lie on the Extracellular side of the membrane. N-linked (GlcNAc...) asparagine glycans are attached at residues Asn11 and Asn18. The chain crosses the membrane as a helical span at residues Ser32–Gly52. The Cytoplasmic segment spans residues Asn53–Asn72. A helical transmembrane segment spans residues Ile73 to Thr93. At Ala94–Leu111 the chain is on the extracellular side. Residues Cys109 and Cys196 are joined by a disulfide bond. A helical membrane pass occupies residues Thr112–Ile132. Residues Glu133–His150 are Cytoplasmic-facing. A helical membrane pass occupies residues Ala151–Leu171. Topologically, residues Ser172–Leu213 are extracellular. N-linked (GlcNAc...) asparagine glycosylation occurs at Asn182. The helical transmembrane segment at Ile214–Ile234 threads the bilayer. Residues Cys235–Leu263 are Cytoplasmic-facing. The helical transmembrane segment at Ile264 to Phe284 threads the bilayer. Over Asp285–Asp297 the chain is Extracellular. Residues Leu298–Tyr318 form a helical membrane-spanning segment. The Cytoplasmic portion of the chain corresponds to Gly319–Ile371. The S-palmitoyl cysteine moiety is linked to residue Cys336.

The protein belongs to the G-protein coupled receptor 1 family. Expressed in hippocampus, striatum, hypothalamus, cerebellum, small intestine, colon and adrenal gland.

Its subcellular location is the cell membrane. Its function is as follows. Receptor for neuropeptide Y and peptide YY. The activity of this receptor is mediated by G proteins that inhibit adenylate cyclase activity. The chain is Neuropeptide Y receptor type 6 (NPY6R) from Oryctolagus cuniculus (Rabbit).